Here is a 37-residue protein sequence, read N- to C-terminus: Somatostatin-37 (37 aa).

The propeptide occupies 1–2 (AL). C26 and C37 are oxidised to a cystine.

Belongs to the somatostatin family.

The protein localises to the secreted. In terms of biological role, somatostatin inhibits the release of somatotropin. The polypeptide is Somatostatin-37 (sst) (Petromyzon marinus (Sea lamprey)).